A 118-amino-acid polypeptide reads, in one-letter code: Cobalt transport protein CbiN (118 aa).

The next 2 helical transmembrane spans lie at 7–27 and 70–90; these read INALLLLAVAALAVLPLVLGL and SALFALQAALGAGVLAYYFGL. A disordered region spans residues 99 to 118; that stretch reads ERASAASGAAAAPGDAPEGD. A compositionally biased stretch (low complexity) spans 102–118; the sequence is SAASGAAAAPGDAPEGD.

This sequence belongs to the CbiN family. As to quaternary structure, forms an energy-coupling factor (ECF) transporter complex composed of an ATP-binding protein (A component, CbiO), a transmembrane protein (T component, CbiQ) and 2 possible substrate-capture proteins (S components, CbiM and CbiN) of unknown stoichimetry.

It localises to the cell membrane. The protein operates within cofactor biosynthesis; adenosylcobalamin biosynthesis. Functionally, part of the energy-coupling factor (ECF) transporter complex CbiMNOQ involved in cobalt import. This Streptomyces coelicolor (strain ATCC BAA-471 / A3(2) / M145) protein is Cobalt transport protein CbiN.